We begin with the raw amino-acid sequence, 280 residues long: Late embryogenesis abundant protein M17 (280 aa).

An N-terminal signal peptide occupies residues 1–22 (MGNLKSLVLLALLFSFSVAVFA). N-linked (GlcNAc...) asparagine glycosylation occurs at Asn-23. 2 repeat units span residues 76 to 97 (GGCRWGCCGGWWRGRCRYCCRS) and 131 to 152 (GGCRWGCCGGWWRGRCRYCCRS). The 4 X 22 AA repeats, Cys-rich stretch occupies residues 76–262 (GGCRWGCCGG…RGRCRYCCRS (187 aa)). The segment at 163-184 (VEPNDVEPQQGGRGGGGGGGGG) is disordered. Over residues 173 to 184 (GGRGGGGGGGGG) the composition is skewed to gly residues. Residues 186 to 207 (GGCRWGCCGGWWRGRCRYCCRS) form repeat 3. The interval 218-239 (VEPNDVEPQQGGRGGGGGGGGG) is disordered. Residues 228 to 239 (GGRGGGGGGGGG) show a composition bias toward gly residues. Repeat 4 spans residues 241–262 (GGCRWGCCGGWWRGRCRYCCRS).

May be involved in the acquisition of desiccation tolerance during late phase of embryogenesis. This chain is Late embryogenesis abundant protein M17, found in Arabidopsis thaliana (Mouse-ear cress).